Here is a 471-residue protein sequence, read N- to C-terminus: Ribulose bisphosphate carboxylase large chain (471 aa).

The substrate site is built by Asn115 and Thr165. Catalysis depends on Lys167, which acts as the Proton acceptor. Lys169 is a binding site for substrate. Residues Lys193, Asp195, and Glu196 each contribute to the Mg(2+) site. Residue Lys193 is modified to N6-carboxylysine. Residue His286 is the Proton acceptor of the active site. 3 residues coordinate substrate: Arg287, His319, and Ser371.

The protein belongs to the RuBisCO large chain family. Type I subfamily. As to quaternary structure, heterohexadecamer of 8 large chains and 8 small chains. Mg(2+) is required as a cofactor.

The enzyme catalyses 2 (2R)-3-phosphoglycerate + 2 H(+) = D-ribulose 1,5-bisphosphate + CO2 + H2O. It catalyses the reaction D-ribulose 1,5-bisphosphate + O2 = 2-phosphoglycolate + (2R)-3-phosphoglycerate + 2 H(+). Its function is as follows. RuBisCO catalyzes two reactions: the carboxylation of D-ribulose 1,5-bisphosphate, the primary event in carbon dioxide fixation, as well as the oxidative fragmentation of the pentose substrate. Both reactions occur simultaneously and in competition at the same active site. The protein is Ribulose bisphosphate carboxylase large chain of Alvinoconcha hessleri symbiotic bacterium.